Here is a 446-residue protein sequence, read N- to C-terminus: G patch domain-containing protein 4 (446 aa).

An N-acetylmethionine modification is found at Met1. Thr4 carries the post-translational modification Phosphothreonine. Residues 11 to 57 (GMKFAEEQLLKHGWTQGKGLGRKENGITQALRVTLKQDTHGVGHDPA) form the G-patch domain. A Glycyl lysine isopeptide (Lys-Gly) (interchain with G-Cter in SUMO2) cross-link involves residue Lys46. Thr116 is subject to Phosphothreonine. Disordered regions lie at residues 116 to 140 (TSGGEKPNKDLESCSDDDNQGSKSP) and 188 to 446 (QDPG…KKRD). Ser128, Ser130, and Ser139 each carry phosphoserine. Positions 166–251 (TMKAKLARLE…KKKRRHQEGK (86 aa)) form a coiled coil. The segment covering 219–237 (ASERNDADEKHPEHAEQNI) has biased composition (basic and acidic residues). Positions 238–248 (RKSKKKKRRHQ) are enriched in basic residues. Basic and acidic residues-rich tracts occupy residues 249–268 (EGKVSDEREGTTKGNEKEDA), 297–328 (HHEEEKMGVLEEGGKGKEAAGSVRTEEVESRA), 363–375 (REAESRACSDGRS), and 392–409 (LDVRDEKDGGAREAESRA). Composition is skewed to basic residues over residues 416–427 (RGKRKRQQHPKK) and 437–446 (KAKKKQKKRD).

In Homo sapiens (Human), this protein is G patch domain-containing protein 4 (GPATCH4).